The primary structure comprises 272 residues: Tryptophan synthase alpha chain (272 aa).

Catalysis depends on proton acceptor residues glutamate 49 and glutamate 60.

This sequence belongs to the TrpA family. In terms of assembly, tetramer of two alpha and two beta chains.

The enzyme catalyses (1S,2R)-1-C-(indol-3-yl)glycerol 3-phosphate + L-serine = D-glyceraldehyde 3-phosphate + L-tryptophan + H2O. It participates in amino-acid biosynthesis; L-tryptophan biosynthesis; L-tryptophan from chorismate: step 5/5. The alpha subunit is responsible for the aldol cleavage of indoleglycerol phosphate to indole and glyceraldehyde 3-phosphate. The sequence is that of Tryptophan synthase alpha chain from Legionella pneumophila (strain Paris).